The chain runs to 309 residues: Putative taste receptor type 2 member 36 (309 aa).

Residue M1 is a topological domain, extracellular. Residues 2 to 22 traverse the membrane as a helical segment; the sequence is ICFLLIILSILVVFAFVLGNF. At 23-46 the chain is on the cytoplasmic side; sequence SNGFIALVNVIDWVKRQKISSADQ. A helical transmembrane segment spans residues 47–67; that stretch reads ILTALVVSRVGLLWVILLHWY. Over 68 to 79 the chain is Extracellular; the sequence is SNVLNSALYSSE. Residues 80 to 100 traverse the membrane as a helical segment; that stretch reads VIIFISNAWAIINHFSIWLAT. Over 101–126 the chain is Cytoplasmic; that stretch reads SLSIFYLLKIVNFSRLIFHHLKRKAK. A helical membrane pass occupies residues 127–147; sequence SVVLVIVLGPLVFLVCHLVMK. Residues 148–181 are Extracellular-facing; it reads HTYINVWTKEYEGNVTWKIKLRNAIHLSNLTVST. 2 N-linked (GlcNAc...) asparagine glycosylation sites follow: N161 and N176. The chain crosses the membrane as a helical span at residues 182-202; sequence LANLIPFTLTLISFLLLIYSL. Over 203 to 229 the chain is Cytoplasmic; it reads CKHLKKMQLHGKGSQDPSTKVHIKALQ. A helical transmembrane segment spans residues 230–250; it reads TVTSFLLLCAIYFLSMIISVC. Residues 251 to 259 are Extracellular-facing; it reads NFGRLEKQP. The helical transmembrane segment at 260-280 threads the bilayer; the sequence is VFMFCQAIIFSYPSTHPFILI. Over 281 to 309 the chain is Cytoplasmic; sequence LGNKKLKQIFLSVFWQMRYWVKGEKPSSP.

This sequence belongs to the G-protein coupled receptor T2R family.

Its subcellular location is the membrane. Putative taste receptor which may play a role in the perception of bitterness. The protein is Putative taste receptor type 2 member 36 of Homo sapiens (Human).